The following is a 338-amino-acid chain: Formamidase (338 aa).

One can recognise a CN hydrolase domain in the interval Leu-14–Pro-260. The Proton acceptor role is filled by Glu-60. Lys-133 (proton donor) is an active-site residue. Catalysis depends on Cys-166, which acts as the Nucleophile.

It belongs to the carbon-nitrogen hydrolase superfamily. Aliphatic amidase family.

It carries out the reaction formamide + H2O = formate + NH4(+). Functionally, is an aliphatic amidase with a restricted substrate specificity, as it only hydrolyzes formamide. The polypeptide is Formamidase (Photorhabdus laumondii subsp. laumondii (strain DSM 15139 / CIP 105565 / TT01) (Photorhabdus luminescens subsp. laumondii)).